The chain runs to 596 residues: Elongation factor 4 (596 aa).

One can recognise a tr-type G domain in the interval 2-183 (ENIRNFSIIA…AIIERIPAPS (182 aa)). Residues 14-19 (DHGKST) and 130-133 (NKID) each bind GTP.

Belongs to the TRAFAC class translation factor GTPase superfamily. Classic translation factor GTPase family. LepA subfamily.

The protein localises to the cell inner membrane. The catalysed reaction is GTP + H2O = GDP + phosphate + H(+). Required for accurate and efficient protein synthesis under certain stress conditions. May act as a fidelity factor of the translation reaction, by catalyzing a one-codon backward translocation of tRNAs on improperly translocated ribosomes. Back-translocation proceeds from a post-translocation (POST) complex to a pre-translocation (PRE) complex, thus giving elongation factor G a second chance to translocate the tRNAs correctly. Binds to ribosomes in a GTP-dependent manner. This chain is Elongation factor 4, found in Nitratiruptor sp. (strain SB155-2).